A 267-amino-acid polypeptide reads, in one-letter code: Undecaprenyl-diphosphatase (267 aa).

A run of 7 helical transmembrane segments spans residues 1–21 (MSLF…FLPV), 40–60 (GQVI…LYFW), 85–105 (LAMG…ALHF), 111–131 (ALRS…LLWW), 190–210 (MLMS…DVAV), 219–239 (DGAI…SLMM), and 245–265 (VSFT…LGIA).

This sequence belongs to the UppP family.

The protein localises to the cell inner membrane. It carries out the reaction di-trans,octa-cis-undecaprenyl diphosphate + H2O = di-trans,octa-cis-undecaprenyl phosphate + phosphate + H(+). Functionally, catalyzes the dephosphorylation of undecaprenyl diphosphate (UPP). Confers resistance to bacitracin. The polypeptide is Undecaprenyl-diphosphatase (Ruegeria pomeroyi (strain ATCC 700808 / DSM 15171 / DSS-3) (Silicibacter pomeroyi)).